The primary structure comprises 905 residues: Transcription termination factor 1 (905 aa).

Composition is skewed to basic and acidic residues over residues Met-1–Asp-16 and Ile-24–Ser-33. Residues Met-1 to Ser-33 are disordered. The tract at residues Met-1–Lys-223 is N-terminal region (NRD). Phosphoserine is present on Ser-65. Residues Ser-151 to Gln-443 are disordered. Composition is skewed to basic residues over residues Val-163–Lys-174 and His-215–Ser-226. Ser-240 is subject to Phosphoserine. Thr-248 carries the post-translational modification Phosphothreonine. 3 stretches are compositionally biased toward basic residues: residues Thr-270 to Ser-283, Asn-330 to Ser-339, and Thr-385 to Arg-401. Residue Ser-403 is modified to Phosphoserine. Positions Pro-410 to Phe-419 are enriched in polar residues. At Tyr-476 the chain carries Phosphotyrosine. Phosphoserine is present on residues Ser-478, Ser-481, and Ser-487. The tract at residues Leu-498–Pro-886 is may be involved in interaction with ARF. Myb-like domains are found at residues Asp-612 to Ser-661 and Ser-661 to Leu-745. A Glycyl lysine isopeptide (Lys-Gly) (interchain with G-Cter in SUMO2) cross-link involves residue Lys-700. A Phosphoserine modification is found at Ser-872.

As to quaternary structure, oligomer. The oligomeric structure enables to interact simultaneously with two separate DNA fragments. Interacts with BAZ2A/TIP5. Interacts with CAVIN1. Interacts (via the N-terminal region (NRD) and a C-terminal region) with CDKN2A/ARF; the interaction is direct. Interacts (via C-terminal region) with NPM1/B23.

Its subcellular location is the nucleus. It localises to the nucleolus. It is found in the nucleoplasm. In terms of biological role, multifunctional nucleolar protein that terminates ribosomal gene transcription, mediates replication fork arrest and regulates RNA polymerase I transcription on chromatin. Plays a dual role in rDNA regulation, being involved in both activation and silencing of rDNA transcription. Interaction with BAZ2A/TIP5 recovers DNA-binding activity. In Homo sapiens (Human), this protein is Transcription termination factor 1 (TTF1).